We begin with the raw amino-acid sequence, 621 residues long: Phosphomethylpyrimidine synthase (621 aa).

Over residues 1-23 (MTAPFLSSLSPTSPLASATAPFP) the composition is skewed to low complexity. The segment at 1 to 29 (MTAPFLSSLSPTSPLASATAPFPGSRKVY) is disordered. Substrate is bound by residues Asn-215, Met-244, Tyr-273, His-309, 329-331 (SRG), 370-373 (DGLR), and Glu-409. Position 413 (His-413) interacts with Zn(2+). Residue Tyr-436 participates in substrate binding. Zn(2+) is bound at residue His-477. [4Fe-4S] cluster is bound by residues Cys-557, Cys-560, and Cys-565.

This sequence belongs to the ThiC family. As to quaternary structure, homodimer. The cofactor is [4Fe-4S] cluster.

It carries out the reaction 5-amino-1-(5-phospho-beta-D-ribosyl)imidazole + S-adenosyl-L-methionine = 4-amino-2-methyl-5-(phosphooxymethyl)pyrimidine + CO + 5'-deoxyadenosine + formate + L-methionine + 3 H(+). Its pathway is cofactor biosynthesis; thiamine diphosphate biosynthesis. Functionally, catalyzes the synthesis of the hydroxymethylpyrimidine phosphate (HMP-P) moiety of thiamine from aminoimidazole ribotide (AIR) in a radical S-adenosyl-L-methionine (SAM)-dependent reaction. This chain is Phosphomethylpyrimidine synthase, found in Rhodospirillum rubrum (strain ATCC 11170 / ATH 1.1.1 / DSM 467 / LMG 4362 / NCIMB 8255 / S1).